A 44-amino-acid chain; its full sequence is MRDIKTYLSTAPVLATLWFGSLAGLLIEINRFFPDALTFPFFSF.

A helical membrane pass occupies residues 7–27 (YLSTAPVLATLWFGSLAGLLI).

This sequence belongs to the PsaJ family.

The protein localises to the plastid. It localises to the chloroplast thylakoid membrane. In terms of biological role, may help in the organization of the PsaE and PsaF subunits. The chain is Photosystem I reaction center subunit IX from Cycas taitungensis (Prince sago).